The following is a 364-amino-acid chain: Aminomethyltransferase (364 aa).

Belongs to the GcvT family. In terms of assembly, the glycine cleavage system is composed of four proteins: P, T, L and H.

It carries out the reaction N(6)-[(R)-S(8)-aminomethyldihydrolipoyl]-L-lysyl-[protein] + (6S)-5,6,7,8-tetrahydrofolate = N(6)-[(R)-dihydrolipoyl]-L-lysyl-[protein] + (6R)-5,10-methylene-5,6,7,8-tetrahydrofolate + NH4(+). In terms of biological role, the glycine cleavage system catalyzes the degradation of glycine. The polypeptide is Aminomethyltransferase (Escherichia coli O17:K52:H18 (strain UMN026 / ExPEC)).